The sequence spans 575 residues: Methionine--tRNA ligase, mitochondrial (575 aa).

Positions 20–32 (PIFYPNAKPHLGH) match the 'HIGH' region motif. The 'KMSKS' region signature appears at 341-345 (KMSKS). K344 lines the ATP pocket.

This sequence belongs to the class-I aminoacyl-tRNA synthetase family.

It is found in the mitochondrion matrix. The catalysed reaction is tRNA(Met) + L-methionine + ATP = L-methionyl-tRNA(Met) + AMP + diphosphate. In terms of biological role, catalyzes the attachment of methionine to tRNA(Met) in the mitochondrion. This chain is Methionine--tRNA ligase, mitochondrial (MSM1), found in Saccharomyces cerevisiae (strain ATCC 204508 / S288c) (Baker's yeast).